Reading from the N-terminus, the 335-residue chain is DNA-directed RNA polymerase subunit alpha (335 aa).

An alpha N-terminal domain (alpha-NTD) region spans residues 1-231; it reads MVREKITVST…DLLIPFLHTK (231 aa). The interval 263–335 is alpha C-terminal domain (alpha-CTD); it reads KKMALKSIFI…FVIDLPKNKF (73 aa).

This sequence belongs to the RNA polymerase alpha chain family. In plastids the minimal PEP RNA polymerase catalytic core is composed of four subunits: alpha, beta, beta', and beta''. When a (nuclear-encoded) sigma factor is associated with the core the holoenzyme is formed, which can initiate transcription.

Its subcellular location is the plastid. The protein resides in the chloroplast. It carries out the reaction RNA(n) + a ribonucleoside 5'-triphosphate = RNA(n+1) + diphosphate. In terms of biological role, DNA-dependent RNA polymerase catalyzes the transcription of DNA into RNA using the four ribonucleoside triphosphates as substrates. This Lactuca sativa (Garden lettuce) protein is DNA-directed RNA polymerase subunit alpha.